A 741-amino-acid polypeptide reads, in one-letter code: Zinc transporter ZIP6 (741 aa).

The first 20 residues, 1 to 20 (MATNLSVIMILTFALWVTNP), serve as a signal peptide directing secretion. The Extracellular portion of the chain corresponds to 21-311 (LHELQSTAAF…PKTYSLQIAW (291 aa)). N-linked (GlcNAc...) asparagine glycosylation occurs at asparagine 68. Over residues 95–111 (HDHERHSDHERHSDHER) the composition is skewed to basic and acidic residues. Disordered stretches follow at residues 95–172 (HDHE…EVTS) and 189–213 (ETPK…EKSR). Polar residues predominate over residues 135 to 147 (DNSGKNPNTSQGK). Asparagine 142 carries an N-linked (GlcNAc...) asparagine glycan. The span at 150–162 (RPAEHVNGRRNGK) shows a compositional bias: basic and acidic residues. The span at 163 to 172 (ESASSSEVTS) shows a compositional bias: low complexity. Residues 200 to 209 (INPSTPPSIT) are compositionally biased toward polar residues. N-linked (GlcNAc...) asparagine glycosylation is found at asparagine 226, asparagine 251, and asparagine 268. A helical membrane pass occupies residues 312 to 332 (LGGFIAISIISFLSLLGVILV). The Cytoplasmic segment spans residues 333 to 341 (PLMNRVFFK). A helical transmembrane segment spans residues 342 to 362 (FLLSFLVALAVGTLSGDALLH). Residues 363 to 409 (LLPHSHASHHHSHSHEEPAMEMKRGPLFSHLSAQNLEESSYFDSTWK) are Extracellular-facing. Residues 410–430 (GLTALGGLYFMFLVEHVLTLI) form a helical membrane-spanning segment. Over 431–643 (KQFKDKKKKN…LKAGMTVKQA (213 aa)) the chain is Cytoplasmic. Positions 434–494 (KDKKKKNQKK…QEPSPFDSQQ (61 aa)) are disordered. Residues 450 to 475 (VESKKQLSKYESQLSTNEEKVDTGER) adopt a coiled-coil conformation. Residues serine 457 and serine 464 each carry the phosphoserine modification. Residues 466 to 477 (NEEKVDTGERPE) show a composition bias toward basic and acidic residues. Positions 481 to 494 (QADSQEPSPFDSQQ) are enriched in polar residues. The chain crosses the membrane as a helical span at residues 644–664 (VLYNALSAMLAYLGMATGIFI). Over 665 to 672 (GHYAENVS) the chain is Extracellular. The N-linked (GlcNAc...) asparagine glycan is linked to asparagine 670. A helical membrane pass occupies residues 673–693 (MWIFALTAGLFMYVALVDMVP). Over 694 to 710 (EMLHNDASDHGCSRWGY) the chain is Cytoplasmic. Residues 711–731 (FFLQNAGILLGFGIMLLISIF) traverse the membrane as a helical segment. The Extracellular portion of the chain corresponds to 732-741 (EHKIVFRINF).

This sequence belongs to the ZIP transporter (TC 2.A.5) family. In terms of assembly, interacts with SLC39A10; which triggers cells to undergo EMT and mitosis. Found in a complex with SLC39A6, SLC39A10 and with the 'Ser-727' phosphorylated form of STAT3 throughout mitosis. Found in a complex with SLC39A6, SLC39A10 and with NCAM1; this complex controls NCAM1 phosphorylation and integration into focal adhesion complexes during epithelial-to-mesenchymal transition (EMT). Found in a complex with SLC39A6, SLC39A10 and with GSK3B that controls NCAM1 phosphorylation. In terms of processing, cleaved on the N-terminus before locating to the plasma membrane. Post-translationally, N-glycosylated. Phosphorylated by ZAP70 in response to TCR stimulation leading to its activation. As to expression, expressed in the endothelial cells of the brain capillaries.

The protein resides in the cell membrane. It localises to the cell projection. It is found in the lamellipodium membrane. Its subcellular location is the membrane raft. The protein localises to the apical cell membrane. The catalysed reaction is Zn(2+)(in) = Zn(2+)(out). Its function is as follows. Zinc-influx transporter which plays a role in zinc homeostasis and in the induction of epithelial-to-mesenchymal transition (EMT). When associated with SLC39A10, the heterodimer formed by SLC39A10 and SLC39A6 mediates cellular zinc uptake to trigger cells to undergo epithelial- to-mesenchymal transition (EMT). The SLC39A10-SLC39A6 heterodimer also controls NCAM1 phosphorylation and its integration into focal adhesion complexes during EMT. Zinc influx inactivates GSK3B, enabling unphosphorylated SNAI1 in the nucleus to down-regulate adherence genes such as CDH1, causing loss of cell adherence. In addition, the SLC39A10-SLC39A6 heterodimer plays an essentiel role in initiating mitosis by importing zinc into cells to initiate a pathway resulting in the onset of mitosis. Participates in the T-cell receptor signaling regulation by mediating cellular zinc uptake into activated lymphocytes. Regulates the zinc influx necessary for proper meiotic progression to metaphase II (MII) that allows the oocyte-to-egg transition. The protein is Zinc transporter ZIP6 of Rattus norvegicus (Rat).